A 120-amino-acid chain; its full sequence is Small ribosomal subunit protein uS13 (120 aa).

The interval His92–Lys120 is disordered. Basic residues predominate over residues Ala107–Lys120.

Belongs to the universal ribosomal protein uS13 family. As to quaternary structure, part of the 30S ribosomal subunit. Forms a loose heterodimer with protein S19. Forms two bridges to the 50S subunit in the 70S ribosome.

In terms of biological role, located at the top of the head of the 30S subunit, it contacts several helices of the 16S rRNA. In the 70S ribosome it contacts the 23S rRNA (bridge B1a) and protein L5 of the 50S subunit (bridge B1b), connecting the 2 subunits; these bridges are implicated in subunit movement. Contacts the tRNAs in the A and P-sites. This Helicobacter hepaticus (strain ATCC 51449 / 3B1) protein is Small ribosomal subunit protein uS13.